Reading from the N-terminus, the 175-residue chain is Protein tyrosine phosphatase PRL-1 (175 aa).

The region spanning 15-172 (KPSRVLFHFL…YKRRHQGAGC (158 aa)) is the Tyrosine-protein phosphatase domain. Cys53 and Cys114 are oxidised to a cystine. Asp76 serves as the catalytic Proton donor. Catalysis depends on Cys114, which acts as the Phosphocysteine intermediate. 116 to 120 (AGLGR) contributes to the substrate binding site. Cys172 carries the post-translational modification Cysteine methyl ester. A lipid anchor (S-farnesyl cysteine) is attached at Cys172. Residues 173-175 (VIM) constitute a propeptide, removed in mature form.

Belongs to the protein-tyrosine phosphatase family.

The protein localises to the cytoplasm. It localises to the mitochondrion matrix. It is found in the kinetoplast. Its subcellular location is the secreted. The protein resides in the extracellular exosome. The enzyme catalyses O-phospho-L-tyrosyl-[protein] + H2O = L-tyrosyl-[protein] + phosphate. Its activity is regulated as follows. Activated in a reduced environment which promotes the reduction of the disulfide bond between the regulatory Cys-53 and catalytic Cys-114 residues. Has protein tyrosine phosphatase activity and may act as a virulence factor to support intracellular survival in host macrophages. In Leishmania major, this protein is Protein tyrosine phosphatase PRL-1.